The sequence spans 110 residues: Phosphoribosyl-ATP pyrophosphatase (110 aa).

This sequence belongs to the PRA-PH family.

Its subcellular location is the cytoplasm. The enzyme catalyses 1-(5-phospho-beta-D-ribosyl)-ATP + H2O = 1-(5-phospho-beta-D-ribosyl)-5'-AMP + diphosphate + H(+). Its pathway is amino-acid biosynthesis; L-histidine biosynthesis; L-histidine from 5-phospho-alpha-D-ribose 1-diphosphate: step 2/9. This chain is Phosphoribosyl-ATP pyrophosphatase, found in Lacticaseibacillus casei (strain BL23) (Lactobacillus casei).